The following is a 331-amino-acid chain: dTDP-glucose 4,6-dehydratase (331 aa).

NAD(+)-binding positions include 11 to 12, 33 to 36, 57 to 58, 77 to 81, and serine 96; these read FI, DALT, DI, and FAAET. Threonine 81 contacts substrate. A substrate-binding site is contributed by threonine 120. Catalysis depends on aspartate 121, which acts as the Proton donor. Residues glutamate 122 and tyrosine 147 each act as proton acceptor in the active site. 147-151 contributes to the NAD(+) binding site; it reads YSSTK. Substrate is bound at residue asparagine 176. An NAD(+)-binding site is contributed by asparagine 177. Substrate is bound by residues 186–191, 202–204, arginine 211, asparagine 246, and 269–273; these read KFIPRQ, KLY, and DRAGH.

This sequence belongs to the NAD(P)-dependent epimerase/dehydratase family. dTDP-glucose dehydratase subfamily. Homodimer. Requires NAD(+) as cofactor.

The catalysed reaction is dTDP-alpha-D-glucose = dTDP-4-dehydro-6-deoxy-alpha-D-glucose + H2O. The protein operates within carbohydrate biosynthesis; dTDP-L-rhamnose biosynthesis. In terms of biological role, catalyzes the dehydration of dTDP-D-glucose to form dTDP-6-deoxy-D-xylo-4-hexulose via a three-step process involving oxidation, dehydration and reduction. Involved in the biosynthesis of the dTDP-L-rhamnose which is a component of the critical linker, D-N-acetylglucosamine-L-rhamnose disaccharide, which connects the galactan region of arabinogalactan to peptidoglycan via a phosphodiester linkage. This Mycolicibacterium smegmatis (strain ATCC 700084 / mc(2)155) (Mycobacterium smegmatis) protein is dTDP-glucose 4,6-dehydratase (rmlB).